Reading from the N-terminus, the 354-residue chain is Rhodopsin (354 aa).

The Extracellular segment spans residues 1-36 (MNGTEGPYFNVPMVNTTGIVRSPYEYPQYYLVSPAA). 2 N-linked (GlcNAc...) asparagine glycosylation sites follow: asparagine 2 and asparagine 15. The chain crosses the membrane as a helical span at residues 37–61 (YAALGAYMFFLILVGFPINFLTLYV). Residues 62–73 (TLEHKKLRTPLN) are Cytoplasmic-facing. The helical transmembrane segment at 74–96 (YILLNLAVADLFMVFGGFTTTMY) threads the bilayer. The Extracellular segment spans residues 97–110 (TSMHGYFVLGRLGC). A disulfide bridge links cysteine 110 with cysteine 187. A helical membrane pass occupies residues 111–133 (NLEGFFATLGGEIGLWSLVVLAI). A 'Ionic lock' involved in activated form stabilization motif is present at residues 134–136 (ERW). At 134-152 (ERWVVVCKPISNFRFGENH) the chain is on the cytoplasmic side. Residues 153 to 173 (AIMGLVFTWIMAASCAVPPLV) traverse the membrane as a helical segment. Topologically, residues 174 to 202 (GWSRYIPEGMQCSCGVDYYTRAEGFNNES) are extracellular. The helical transmembrane segment at 203–224 (FVVYMFVCHFLIPLIVVFFCYG) threads the bilayer. The Cytoplasmic portion of the chain corresponds to 225–252 (RLLCAVKEAAAAQQESETTQRAEREVTR). Residues 253–274 (MVVIMVIGFLVCWLPYASVAWY) traverse the membrane as a helical segment. The Extracellular segment spans residues 275–286 (IFTNQGSEFGPL). Residues 287 to 308 (FMTIPAFFAKSSSIYNPAIYIC) form a helical membrane-spanning segment. The residue at position 296 (lysine 296) is an N6-(retinylidene)lysine. The Cytoplasmic portion of the chain corresponds to 309–354 (MNKQFRNCMITTLCCGKNPFEEEEGASTTASKTEASSVSSSSVSPA). 2 S-palmitoyl cysteine lipidation sites follow: cysteine 322 and cysteine 323. The disordered stretch occupies residues 332 to 354 (EGASTTASKTEASSVSSSSVSPA). Positions 334–354 (ASTTASKTEASSVSSSSVSPA) are enriched in low complexity.

Belongs to the G-protein coupled receptor 1 family. Opsin subfamily. Phosphorylated on some or all of the serine and threonine residues present in the C-terminal region. In terms of processing, contains one covalently linked retinal chromophore.

It is found in the membrane. It localises to the cell projection. The protein localises to the cilium. Its subcellular location is the photoreceptor outer segment. Its function is as follows. Photoreceptor required for image-forming vision at low light intensity. While most salt water fish species use retinal as chromophore, most freshwater fish use 3-dehydroretinal, or a mixture of retinal and 3-dehydroretinal. Light-induced isomerization of 11-cis to all-trans retinal triggers a conformational change that activates signaling via G-proteins. Subsequent receptor phosphorylation mediates displacement of the bound G-protein alpha subunit by arrestin and terminates signaling. In Oryzias latipes (Japanese rice fish), this protein is Rhodopsin (rho).